A 276-amino-acid chain; its full sequence is MAASGEEDMSELSPAAAPNLDWYEKPEETHAPEVDLETVIPPAQEPSNPAEPFCPRDLVPVVFPGPVSQEDCCQFTCELLKHILYQRHQLPLPYEQLKHFYRKVPQAEDTARKKAWLATEARNRKCQQALAELESVLSHLRDFFARTLVPQVLILLGGNALSPKEFYELDLSRLAPFGVDQGLNTAACLRRLFRAIFLADPFSELQTPPLMGTIVMVQGHRDCGEDWFQPKLNYRVPSRGHKLTVTLSCGRPSVPAMASEDYIWFQAPVTLKGFHE.

The segment covering 1-10 (MAASGEEDMS) has biased composition (acidic residues). The disordered stretch occupies residues 1-30 (MAASGEEDMSELSPAAAPNLDWYEKPEETH). The segment at 49-81 (PAEPFCPRDLVPVVFPGPVSQEDCCQFTCELLK) is interaction with MAD2L1.

This sequence belongs to the MAD2L1BP family. In terms of assembly, interacts with MAD2L1.

The protein localises to the nucleus. It is found in the nucleoplasm. Its subcellular location is the cytoplasm. It localises to the cytoskeleton. The protein resides in the spindle. Functionally, may function to silence the spindle checkpoint and allow mitosis to proceed through anaphase by binding MAD2L1 after it has become dissociated from the MAD2L1-CDC20 complex. The polypeptide is MAD2L1-binding protein (Mad2l1bp) (Mus musculus (Mouse)).